The sequence spans 298 residues: Transcription factor SRM1 (298 aa).

Residues 7–62 (SDGSVWSREDDIAFERALANNTDESEERWEKIAADVPGKSVEQIKEHYELLVEDVT) form the SANT domain. Residues 68–118 (CVPLPAYGSPEGSNGHAGDEGASSKKGGNSHAGESNQAGKSKSDQERRKGI) are disordered. The span at 108 to 118 (SKSDQERRKGI) shows a compositional bias: basic and acidic residues. An HTH myb-type domain is found at 111–168 (DQERRKGIAWTEDEHRLFLLGLDKYGKGDWRSISRNFVVTRTPTQVASHAQKYFIRLN). Residues 140–164 (WRSISRNFVVTRTPTQVASHAQKYF) constitute a DNA-binding region (H-T-H motif). Polar residues predominate over residues 182-200 (ITSVGNADVSTPQGPITGQ). The interval 182 to 245 (ITSVGNADVS…GPPMYGTPAI (64 aa)) is disordered. A compositionally biased stretch (low complexity) spans 201-215 (NNSNNNNNNNNNNSS).

As to expression, expressed in young seedlings, developing leaves, sepals and trichomes.

The protein localises to the nucleus. Functionally, transcription activator that coordinates abscisic acid (ABA) biosynthesis and signaling-related genes via binding to the specific promoter motif 5'-(A/T)AACCAT-3'. Represses ABA-mediated salt (e.g. NaCl and KCl) stress tolerance. Regulates leaf shape and promotes vegetative growth. This chain is Transcription factor SRM1, found in Arabidopsis thaliana (Mouse-ear cress).